Consider the following 290-residue polypeptide: ATP synthase gamma chain (290 aa).

Belongs to the ATPase gamma chain family. In terms of assembly, F-type ATPases have 2 components, CF(1) - the catalytic core - and CF(0) - the membrane proton channel. CF(1) has five subunits: alpha(3), beta(3), gamma(1), delta(1), epsilon(1). CF(0) has three main subunits: a, b and c.

The protein resides in the cell inner membrane. Functionally, produces ATP from ADP in the presence of a proton gradient across the membrane. The gamma chain is believed to be important in regulating ATPase activity and the flow of protons through the CF(0) complex. In Desulfotalea psychrophila (strain LSv54 / DSM 12343), this protein is ATP synthase gamma chain.